Consider the following 587-residue polypeptide: Putative ankyrin repeat protein L66 (587 aa).

16 ANK repeats span residues 77–106 (DKNL…DIRI), 108–136 (NNYP…DVSD), 137–166 (YDNY…DVHC), 168–196 (DNAP…DVNY), 199–228 (NEDL…NIHF), 230–256 (DSLI…ILGN), 259–288 (NIRN…SIEN), 302–331 (FKKN…NVAF), 333–360 (DNLP…NVKI), 361–390 (NYEN…NVKD), 392–418 (TAIY…DLIK), 420–448 (HNEI…INKS), 449–478 (IYDK…DIKS), 480–507 (KFHD…KINN), 509–537 (YKNL…NMKC), and 539–567 (RIDT…KLIC).

This Acanthamoeba polyphaga mimivirus (APMV) protein is Putative ankyrin repeat protein L66.